Reading from the N-terminus, the 322-residue chain is 4-hydroxy-3-methylbut-2-enyl diphosphate reductase (322 aa).

Cys15 is a [4Fe-4S] cluster binding site. (2E)-4-hydroxy-3-methylbut-2-enyl diphosphate is bound by residues His44 and His77. The dimethylallyl diphosphate site is built by His44 and His77. His44 and His77 together coordinate isopentenyl diphosphate. Cys99 contributes to the [4Fe-4S] cluster binding site. His127 lines the (2E)-4-hydroxy-3-methylbut-2-enyl diphosphate pocket. Residue His127 participates in dimethylallyl diphosphate binding. His127 serves as a coordination point for isopentenyl diphosphate. Catalysis depends on Glu129, which acts as the Proton donor. Position 168 (Thr168) interacts with (2E)-4-hydroxy-3-methylbut-2-enyl diphosphate. Cys198 is a binding site for [4Fe-4S] cluster. (2E)-4-hydroxy-3-methylbut-2-enyl diphosphate contacts are provided by Ser226, Ser227, Asn228, and Ser270. 4 residues coordinate dimethylallyl diphosphate: Ser226, Ser227, Asn228, and Ser270. Ser226, Ser227, Asn228, and Ser270 together coordinate isopentenyl diphosphate.

Belongs to the IspH family. [4Fe-4S] cluster is required as a cofactor.

It carries out the reaction isopentenyl diphosphate + 2 oxidized [2Fe-2S]-[ferredoxin] + H2O = (2E)-4-hydroxy-3-methylbut-2-enyl diphosphate + 2 reduced [2Fe-2S]-[ferredoxin] + 2 H(+). The catalysed reaction is dimethylallyl diphosphate + 2 oxidized [2Fe-2S]-[ferredoxin] + H2O = (2E)-4-hydroxy-3-methylbut-2-enyl diphosphate + 2 reduced [2Fe-2S]-[ferredoxin] + 2 H(+). It participates in isoprenoid biosynthesis; dimethylallyl diphosphate biosynthesis; dimethylallyl diphosphate from (2E)-4-hydroxy-3-methylbutenyl diphosphate: step 1/1. It functions in the pathway isoprenoid biosynthesis; isopentenyl diphosphate biosynthesis via DXP pathway; isopentenyl diphosphate from 1-deoxy-D-xylulose 5-phosphate: step 6/6. Catalyzes the conversion of 1-hydroxy-2-methyl-2-(E)-butenyl 4-diphosphate (HMBPP) into a mixture of isopentenyl diphosphate (IPP) and dimethylallyl diphosphate (DMAPP). Acts in the terminal step of the DOXP/MEP pathway for isoprenoid precursor biosynthesis. In Neisseria meningitidis serogroup C (strain 053442), this protein is 4-hydroxy-3-methylbut-2-enyl diphosphate reductase.